The following is a 144-amino-acid chain: Deoxyuridine 5'-triphosphate nucleotidohydrolase (144 aa).

Substrate-binding positions include 63–65 (RSG), Asn-76, and 80–82 (TID).

Belongs to the dUTPase family. It depends on Mg(2+) as a cofactor.

It catalyses the reaction dUTP + H2O = dUMP + diphosphate + H(+). It participates in pyrimidine metabolism; dUMP biosynthesis; dUMP from dCTP (dUTP route): step 2/2. Its function is as follows. This enzyme is involved in nucleotide metabolism: it produces dUMP, the immediate precursor of thymidine nucleotides and it decreases the intracellular concentration of dUTP so that uracil cannot be incorporated into DNA. This chain is Deoxyuridine 5'-triphosphate nucleotidohydrolase, found in Phocaeicola vulgatus (strain ATCC 8482 / DSM 1447 / JCM 5826 / CCUG 4940 / NBRC 14291 / NCTC 11154) (Bacteroides vulgatus).